Consider the following 179-residue polypeptide: Large ribosomal subunit protein uL5 (179 aa).

Belongs to the universal ribosomal protein uL5 family. Part of the 50S ribosomal subunit; part of the 5S rRNA/L5/L18/L25 subcomplex. Contacts the 5S rRNA and the P site tRNA. Forms a bridge to the 30S subunit in the 70S ribosome.

Functionally, this is one of the proteins that bind and probably mediate the attachment of the 5S RNA into the large ribosomal subunit, where it forms part of the central protuberance. In the 70S ribosome it contacts protein S13 of the 30S subunit (bridge B1b), connecting the 2 subunits; this bridge is implicated in subunit movement. Contacts the P site tRNA; the 5S rRNA and some of its associated proteins might help stabilize positioning of ribosome-bound tRNAs. This Bacillus cereus (strain 03BB102) protein is Large ribosomal subunit protein uL5.